The primary structure comprises 119 residues: Large ribosomal subunit protein uL22c (119 aa).

The protein belongs to the universal ribosomal protein uL22 family. As to quaternary structure, part of the 50S ribosomal subunit.

Its subcellular location is the plastid. The protein localises to the chloroplast. In terms of biological role, this protein binds specifically to 23S rRNA. The globular domain of the protein is located near the polypeptide exit tunnel on the outside of the subunit, while an extended beta-hairpin is found that lines the wall of the exit tunnel in the center of the 70S ribosome. This chain is Large ribosomal subunit protein uL22c (rpl22), found in Mesostigma viride (Green alga).